The chain runs to 181 residues: Thymidine kinase (181 aa).

13–20 (GPMFSGKS) is a binding site for ATP. Residue Glu-85 is the Proton acceptor of the active site. Phe-115 contributes to the substrate binding site. Zn(2+) contacts are provided by Cys-140 and Cys-143. 159-163 (IEIIG) serves as a coordination point for substrate. 2 residues coordinate Zn(2+): Cys-172 and Cys-175.

It belongs to the thymidine kinase family.

It catalyses the reaction thymidine + ATP = dTMP + ADP + H(+). The protein is Thymidine kinase (TK) of Yaba monkey tumor virus (strain VR587) (YMTV).